The primary structure comprises 114 residues: Probable 4-amino-4-deoxy-L-arabinose-phosphoundecaprenol flippase subunit ArnE (114 aa).

3 helical membrane passes run 38–58, 64–84, and 94–114; these read LTLRWLAIAVVSLGLGMLLWL, LPLSVAYPMLSFNFVLVTLAA, and LRHWLGVAAIIFGILLMSWHL. Residues 43–112 enclose the EamA domain; it reads LAIAVVSLGL…IIFGILLMSW (70 aa).

This sequence belongs to the ArnE family. In terms of assembly, heterodimer of ArnE and ArnF.

Its subcellular location is the cell inner membrane. It functions in the pathway bacterial outer membrane biogenesis; lipopolysaccharide biosynthesis. In terms of biological role, translocates 4-amino-4-deoxy-L-arabinose-phosphoundecaprenol (alpha-L-Ara4N-phosphoundecaprenol) from the cytoplasmic to the periplasmic side of the inner membrane. The polypeptide is Probable 4-amino-4-deoxy-L-arabinose-phosphoundecaprenol flippase subunit ArnE (Yersinia pseudotuberculosis serotype O:1b (strain IP 31758)).